The chain runs to 211 residues: Ribosomal RNA large subunit methyltransferase E (211 aa).

The S-adenosyl-L-methionine site is built by glycine 60, tryptophan 62, aspartate 80, aspartate 96, and aspartate 121. The Proton acceptor role is filled by lysine 161.

This sequence belongs to the class I-like SAM-binding methyltransferase superfamily. RNA methyltransferase RlmE family.

The protein resides in the cytoplasm. The enzyme catalyses uridine(2552) in 23S rRNA + S-adenosyl-L-methionine = 2'-O-methyluridine(2552) in 23S rRNA + S-adenosyl-L-homocysteine + H(+). Specifically methylates the uridine in position 2552 of 23S rRNA at the 2'-O position of the ribose in the fully assembled 50S ribosomal subunit. This is Ribosomal RNA large subunit methyltransferase E from Cellvibrio japonicus (strain Ueda107) (Pseudomonas fluorescens subsp. cellulosa).